A 51-amino-acid chain; its full sequence is VTCDLLSIKGVAEHSACAANCLSMGKAGGRCENGICLCRKTTFKELWDKRF.

3 disulfide bridges follow: Cys-3-Cys-31, Cys-17-Cys-36, and Cys-21-Cys-38. At Phe-51 the chain carries Phenylalanine amide.

The protein localises to the secreted. Functionally, antibacterial peptide against Gram-positive and Gram-negative bacteria and fungi. This Bombus pascuorum (Common carder bumblebee) protein is Defensin.